Consider the following 327-residue polypeptide: Lipoyl synthase (327 aa).

Cys-72, Cys-77, Cys-83, Cys-98, Cys-102, Cys-105, and Ser-313 together coordinate [4Fe-4S] cluster. One can recognise a Radical SAM core domain in the interval 83–302; it reads CWSHGTATIM…RKVGLEKGFL (220 aa).

Belongs to the radical SAM superfamily. Lipoyl synthase family. The cofactor is [4Fe-4S] cluster.

The protein resides in the cytoplasm. The enzyme catalyses [[Fe-S] cluster scaffold protein carrying a second [4Fe-4S](2+) cluster] + N(6)-octanoyl-L-lysyl-[protein] + 2 oxidized [2Fe-2S]-[ferredoxin] + 2 S-adenosyl-L-methionine + 4 H(+) = [[Fe-S] cluster scaffold protein] + N(6)-[(R)-dihydrolipoyl]-L-lysyl-[protein] + 4 Fe(3+) + 2 hydrogen sulfide + 2 5'-deoxyadenosine + 2 L-methionine + 2 reduced [2Fe-2S]-[ferredoxin]. The protein operates within protein modification; protein lipoylation via endogenous pathway; protein N(6)-(lipoyl)lysine from octanoyl-[acyl-carrier-protein]: step 2/2. In terms of biological role, catalyzes the radical-mediated insertion of two sulfur atoms into the C-6 and C-8 positions of the octanoyl moiety bound to the lipoyl domains of lipoate-dependent enzymes, thereby converting the octanoylated domains into lipoylated derivatives. In Francisella tularensis subsp. novicida (strain U112), this protein is Lipoyl synthase.